We begin with the raw amino-acid sequence, 575 residues long: Isocitrate dehydrogenase kinase/phosphatase (575 aa).

Residues 315–321 and lysine 336 each bind ATP; that span reads APGVKGM. The active site involves aspartate 371.

This sequence belongs to the AceK family.

Its subcellular location is the cytoplasm. It carries out the reaction L-seryl-[isocitrate dehydrogenase] + ATP = O-phospho-L-seryl-[isocitrate dehydrogenase] + ADP + H(+). Its function is as follows. Bifunctional enzyme which can phosphorylate or dephosphorylate isocitrate dehydrogenase (IDH) on a specific serine residue. This is a regulatory mechanism which enables bacteria to bypass the Krebs cycle via the glyoxylate shunt in response to the source of carbon. When bacteria are grown on glucose, IDH is fully active and unphosphorylated, but when grown on acetate or ethanol, the activity of IDH declines drastically concomitant with its phosphorylation. In Yersinia pseudotuberculosis serotype I (strain IP32953), this protein is Isocitrate dehydrogenase kinase/phosphatase.